The primary structure comprises 204 residues: Ancillary SecYEG translocon subunit (204 aa).

Topologically, residues 1–23 (MAYTIEEEQELTAIKAWWNENYK) are cytoplasmic. A helical membrane pass occupies residues 24-44 (FIIVCFVIAFGGVFGWNYWQS). Residues 45-204 (HQIQKMHKAS…QLIQVRLNNL (160 aa)) lie on the Periplasmic side of the membrane.

It belongs to the YfgM family. As to quaternary structure, interacts with the SecYEG translocon. Forms a complex with PpiD.

The protein localises to the cell inner membrane. May mediate protein transfer from the SecYEG translocon to the periplasmic chaperone network via its periplasmic C-terminal region. This is Ancillary SecYEG translocon subunit (1057) from Aggregatibacter actinomycetemcomitans (Actinobacillus actinomycetemcomitans).